The sequence spans 365 residues: Aminomethyltransferase (365 aa).

The protein belongs to the GcvT family. In terms of assembly, the glycine cleavage system is composed of four proteins: P, T, L and H.

The enzyme catalyses N(6)-[(R)-S(8)-aminomethyldihydrolipoyl]-L-lysyl-[protein] + (6S)-5,6,7,8-tetrahydrofolate = N(6)-[(R)-dihydrolipoyl]-L-lysyl-[protein] + (6R)-5,10-methylene-5,6,7,8-tetrahydrofolate + NH4(+). In terms of biological role, the glycine cleavage system catalyzes the degradation of glycine. This chain is Aminomethyltransferase, found in Chlorobium luteolum (strain DSM 273 / BCRC 81028 / 2530) (Pelodictyon luteolum).